Reading from the N-terminus, the 280-residue chain is Cytochrome bc1 complex cytochrome c subunit (280 aa).

Residues 25 to 45 (LSGGVLLLIALTIAGGLAAVL) traverse the membrane as a helical segment. 2 Cytochrome c domains span residues 60-140 (ALLR…QANG) and 161-239 (NDLG…KVAT). Heme c contacts are provided by Cys73, Cys76, His77, Cys174, Cys177, and His178. A helical transmembrane segment spans residues 258–278 (GMAMWIIGMVAAIGLALWIGA).

As to quaternary structure, the cytochrome bc1 complex is composed of a cytochrome b (QcrB), the Rieske iron-sulfur protein (QcrA) and a diheme cytochrome c (QcrC) subunit. Binds 2 heme c groups covalently per subunit.

The protein resides in the cell membrane. It catalyses the reaction a quinol + 2 Fe(III)-[cytochrome c](out) = a quinone + 2 Fe(II)-[cytochrome c](out) + 2 H(+)(out). In terms of biological role, cytochrome b subunit of the cytochrome bc1 complex, an essential component of the respiratory electron transport chain required for ATP synthesis. The bc1 complex catalyzes the oxidation of ubiquinol and the reduction of cytochrome c in the respiratory chain. The bc1 complex operates through a Q-cycle mechanism that couples electron transfer to generation of the proton gradient that drives ATP synthesis. The sequence is that of Cytochrome bc1 complex cytochrome c subunit (qcrC) from Mycobacterium bovis (strain ATCC BAA-935 / AF2122/97).